Reading from the N-terminus, the 306-residue chain is Ectoine dioxygenase (306 aa).

Glutamine 127 serves as a coordination point for L-ectoine. Residue lysine 133 coordinates 2-oxoglutarate. The Fe cation site is built by histidine 144, aspartate 146, and histidine 245.

It belongs to the PhyH family. EctD subfamily. Homodimer. Fe(2+) is required as a cofactor.

The catalysed reaction is L-ectoine + 2-oxoglutarate + O2 = 5-hydroxyectoine + succinate + CO2. Functionally, involved in the biosynthesis of 5-hydroxyectoine, called compatible solute, which helps organisms to survive extreme osmotic stress by acting as a highly soluble organic osmolyte. Catalyzes the 2-oxoglutarate-dependent selective hydroxylation of L-ectoine to yield (4S,5S)-5-hydroxyectoine. This is Ectoine dioxygenase from Sphingopyxis alaskensis (strain DSM 13593 / LMG 18877 / RB2256) (Sphingomonas alaskensis).